We begin with the raw amino-acid sequence, 215 residues long: Cytochrome b-c1 complex subunit Rieske, mitochondrial (215 aa).

The N-terminal 22 residues, 1–22, are a transit peptide targeting the mitochondrion; sequence MLGIRSSVKTCFKPMSLTSKRL. Positions 23–30 are cleaved as a propeptide — removed in mature form; it reads ISQSLLAS. The Mitochondrial matrix portion of the chain corresponds to 31–50; sequence KSTYRTPNFDDVLKENNDAD. A helical membrane pass occupies residues 51 to 80; that stretch reads KGRSYAYFMVGAMGLLSSAGAKSTVETFIS. Residues 81-215 lie on the Mitochondrial intermembrane side of the membrane; the sequence is SMTATADVLA…EFDGDKVIVG (135 aa). Positions 90–93 are hinge; the sequence is AMAK. Residues 123 to 214 enclose the Rieske domain; the sequence is PHEIQEANSV…YEFDGDKVIV (92 aa). 4 residues coordinate [2Fe-2S] cluster: Cys-159, His-161, Cys-178, and His-181. A disulfide bond links Cys-164 and Cys-180.

This sequence belongs to the Rieske iron-sulfur protein family. Component of the ubiquinol-cytochrome c oxidoreductase (cytochrome b-c1 complex, complex III, CIII), a multisubunit enzyme composed of 10 subunits. The complex is composed of 3 respiratory subunits cytochrome b (COB), cytochrome c1 (CYT1) and Rieske protein (RIP1), 2 core protein subunits COR1 and QCR2, and 5 low-molecular weight protein subunits QCR6, QCR7, QCR8, QCR9 and QCR10. The complex exists as an obligatory dimer and forms supercomplexes (SCs) in the inner mitochondrial membrane with a monomer or a dimer of cytochrome c oxidase (complex IV, CIV), resulting in 2 different assemblies (supercomplexes III(2)IV and III(2)IV(2)). RIP1 interacts with QCR10 on the intermembrane space (IMS) side, and with QCR9. Requires [2Fe-2S] cluster as cofactor. In terms of processing, processed by both the mitochondrial processing peptidase (MPP) and the mitochondrial intermediate protease (MIP). Initially, MPP removes 22 amino acids from the newly imported precursor in the mitochondrial matrix. This proteolytic processing is then followed by a second proteolytic cleavage by MIP, which removes an octapeptide to generate mature-sized RIP1.

The protein localises to the mitochondrion inner membrane. It catalyses the reaction a quinol + 2 Fe(III)-[cytochrome c](out) = a quinone + 2 Fe(II)-[cytochrome c](out) + 2 H(+)(out). Functionally, component of the ubiquinol-cytochrome c oxidoreductase, a multisubunit transmembrane complex that is part of the mitochondrial electron transport chain which drives oxidative phosphorylation. The respiratory chain contains 3 multisubunit complexes succinate dehydrogenase (complex II, CII), ubiquinol-cytochrome c oxidoreductase (cytochrome b-c1 complex, complex III, CIII) and cytochrome c oxidase (complex IV, CIV), that cooperate to transfer electrons derived from NADH and succinate to molecular oxygen, creating an electrochemical gradient over the inner membrane that drives transmembrane transport and the ATP synthase. The cytochrome b-c1 complex catalyzes electron transfer from ubiquinol to cytochrome c, linking this redox reaction to translocation of protons across the mitochondrial inner membrane, with protons being carried across the membrane as hydrogens on the quinol. In the process called Q cycle, 2 protons are consumed from the matrix, 4 protons are released into the intermembrane space and 2 electrons are passed to cytochrome c. The Rieske protein is a catalytic core subunit containing a [2Fe-2S] iron-sulfur cluster. It cycles between 2 conformational states during catalysis to transfer electrons from the quinol bound in the Q(0) site in cytochrome b (COB) to cytochrome c1 (CYT1). The polypeptide is Cytochrome b-c1 complex subunit Rieske, mitochondrial (RIP1) (Saccharomyces cerevisiae (strain ATCC 204508 / S288c) (Baker's yeast)).